Consider the following 368-residue polypeptide: Proteinase-activated receptor 3 (368 aa).

The N-terminal stretch at 1 to 21 (MEMKVLILVGVRLLFLPTTVC) is a signal peptide. Residues 22–37 (QSGMKHVSDNSALTAE) constitute a propeptide, removed for receptor activation. The Extracellular portion of the chain corresponds to 38 to 93 (SFNGNEHSFEEFPLSDIEGWTGATTTIKAKCPEESITTLHVNNATMGYLRSSLSTK). Asparagine 80 carries N-linked (GlcNAc...) asparagine glycosylation. The chain crosses the membrane as a helical span at residues 94–114 (VIPAIYILVFVIGVPANIVTL). The Cytoplasmic segment spans residues 115–123 (WKLSSRTKS). The helical transmembrane segment at 124-144 (ICLVIFHTNLAIADLLFCVTL) threads the bilayer. Topologically, residues 145-166 (PFKIAYHLNGNDWVFGEVMCRV) are extracellular. Cysteine 164 and cysteine 243 are disulfide-bonded. The helical transmembrane segment at 167-187 (TTVAFYGNMYCAILILTCMGI) threads the bilayer. Topologically, residues 188–208 (NRYLATVHPFTYRKLPKRNFT) are cytoplasmic. A helical transmembrane segment spans residues 209 to 229 (LLMCGVVWVMVVLYMLPLAIL). Residues 230–257 (KQEYHLVQPGITTCHDVHDTCESPLPFQ) lie on the Extracellular side of the membrane. Residues 258 to 278 (FYYFVSLAFFGFLIPFVVSVF) form a helical membrane-spanning segment. Over 279 to 300 (CYTTLIHKLNAQDRKWLRYIKA) the chain is Cytoplasmic. Residues 301–321 (VLLILVIFTICFAPTNIILII) traverse the membrane as a helical segment. Over 322 to 338 (HHANYYYSNTDSLYFMY) the chain is Extracellular. Residues 339-359 (LIALCLGSLNSCLDPFLYFIM) form a helical membrane-spanning segment. Residues 360-368 (SKIVDQLTS) lie on the Cytoplasmic side of the membrane.

This sequence belongs to the G-protein coupled receptor 1 family. Interacts with INSC/inscuteable and GPSM2. Post-translationally, a proteolytic cleavage generates a new N-terminus that functions as a tethered ligand.

Its subcellular location is the cell membrane. Receptor for activated thrombin coupled to G proteins that stimulate phosphoinositide hydrolysis. The sequence is that of Proteinase-activated receptor 3 (F2rl2) from Rattus norvegicus (Rat).